We begin with the raw amino-acid sequence, 307 residues long: Acyl transferase (307 aa).

Catalysis depends on charge relay system residues S116, D213, and H243.

It belongs to the LuxD family.

The protein operates within lipid metabolism; fatty acid reduction for biolumincescence. In terms of biological role, acyl transferase is part of the fatty acid reductase system required for aldehyde biosynthesis; it produces fatty acids for the luminescent reaction. The protein is Acyl transferase of Photorhabdus luminescens (Xenorhabdus luminescens).